A 336-amino-acid polypeptide reads, in one-letter code: Cytoskeleton protein RodZ (336 aa).

Over 1–111 (MNTEATHDKT…LGKRRKKRDG (111 aa)) the chain is Cytoplasmic. The 53-residue stretch at 19–71 (LRNAREQLGLSQQAVAERLCLKVSTVRDIEEDKAPADLASTFLRGYIRSYAKL) folds into the HTH cro/C1-type domain. Residues 30-49 (QQAVAERLCLKVSTVRDIEE) constitute a DNA-binding region (H-T-H motif). A helical; Signal-anchor for type II membrane protein transmembrane segment spans residues 112-132 (WLMSFTWLVLFVVIGLTGAWW). Residues 133-336 (WQNHKAQQEE…TVSAEQSAAQ (204 aa)) lie on the Periplasmic side of the membrane. Positions 152–164 (AALNNSGNNGAQS) are enriched in low complexity. The disordered stretch occupies residues 152–235 (AALNNSGNNG…TTTGNVNVTQ (84 aa)). Polar residues-rich tracts occupy residues 165-190 (VPLNTDSASTSSEPQTAETDSQTVEP) and 200-217 (PDQTAAQNAVVSPSQANV). The segment covering 220 to 235 (APAVTPTTTGNVNVTQ) has biased composition (low complexity).

The protein belongs to the RodZ family.

It localises to the cell inner membrane. Functionally, cytoskeletal protein that is involved in cell-shape control through regulation of the length of the long axis. The polypeptide is Cytoskeleton protein RodZ (Enterobacter sp. (strain 638)).